The following is a 338-amino-acid chain: MLIYDLTYEELEEFIVENGYKKFRADQIWNWLYKQKIEAFSEMNNIPEDIIKLLNDNYTFAGLETVIKNTSADGTIKFLFDLKDANLIETVLMSHNYGMSACVTTQVGCNIGCSFCASGVLKKKRDLTAGEIVAQIIRAEKESGVRVSSIVIMGIGEPFDNYKNFVKFISIVNHPKGLAIGARHITVSTSGLVPKIKEFAHLGIQVNLAVSLHAPNNEIRSKLMKINDRFKVEEVVDAIKYYIHVTNRRVTIEYIMIQDLNDSVETAVELAKLLKGMNVYVNLIPYNTVKEADYQRSSLENRLAFHKTLKEHKITAILRKEQGHDINAACGQLRSQNL.

E89 serves as the catalytic Proton acceptor. The region spanning 95–325 is the Radical SAM core domain; the sequence is HNYGMSACVT…AILRKEQGHD (231 aa). An intrachain disulfide couples C102 to C330. [4Fe-4S] cluster contacts are provided by C109, C113, and C116. S-adenosyl-L-methionine-binding positions include 156-157, S188, 211-213, and N287; these read GE and SLH. C330 serves as the catalytic S-methylcysteine intermediate.

The protein belongs to the radical SAM superfamily. RlmN family. The cofactor is [4Fe-4S] cluster.

It localises to the cytoplasm. It carries out the reaction adenosine(2503) in 23S rRNA + 2 reduced [2Fe-2S]-[ferredoxin] + 2 S-adenosyl-L-methionine = 2-methyladenosine(2503) in 23S rRNA + 5'-deoxyadenosine + L-methionine + 2 oxidized [2Fe-2S]-[ferredoxin] + S-adenosyl-L-homocysteine. The enzyme catalyses adenosine(37) in tRNA + 2 reduced [2Fe-2S]-[ferredoxin] + 2 S-adenosyl-L-methionine = 2-methyladenosine(37) in tRNA + 5'-deoxyadenosine + L-methionine + 2 oxidized [2Fe-2S]-[ferredoxin] + S-adenosyl-L-homocysteine. Its function is as follows. Specifically methylates position 2 of adenine 2503 in 23S rRNA and position 2 of adenine 37 in tRNAs. In Acholeplasma laidlawii (strain PG-8A), this protein is Probable dual-specificity RNA methyltransferase RlmN.